We begin with the raw amino-acid sequence, 285 residues long: Phosphate import ATP-binding protein PstB (285 aa).

In terms of domain architecture, ABC transporter spans 39-280 (LEVSDLQLWY…PAKKQTEDYI (242 aa)). Residue 71 to 78 (GPSGCGKS) coordinates ATP.

The protein belongs to the ABC transporter superfamily. Phosphate importer (TC 3.A.1.7) family. The complex is composed of two ATP-binding proteins (PstB), two transmembrane proteins (PstC and PstA) and a solute-binding protein (PstS).

It localises to the cell inner membrane. The enzyme catalyses phosphate(out) + ATP + H2O = ADP + 2 phosphate(in) + H(+). Functionally, part of the ABC transporter complex PstSACB involved in phosphate import. Responsible for energy coupling to the transport system. This Alkalilimnicola ehrlichii (strain ATCC BAA-1101 / DSM 17681 / MLHE-1) protein is Phosphate import ATP-binding protein PstB.